A 425-amino-acid chain; its full sequence is Diacetylchitobiose binding protein DasA (425 aa).

The signal sequence occupies residues 1–20 (MKRKLIAAIGIAGMMVSIAA). Cysteine 21 carries N-palmitoyl cysteine lipidation. A lipid anchor (S-diacylglycerol cysteine) is attached at cysteine 21.

Belongs to the bacterial solute-binding protein 1 family. As to quaternary structure, the complex is composed of two ATP-binding proteins (MsiK), two transmembrane proteins (DasB and DasC) and a solute-binding protein (DasA).

It localises to the cell membrane. Part of the ABC transporter complex DasABC-MsiK involved in N,N'-diacetylchitobiose ((GlcNAc)2) uptake. Binds specifically to (GlcNAc)2. Can also bind to GlcNAc, (GlcNAc)3, (GlcNAc)4 and (GlcNAc)5, but it exhibits the highest affinity for (GlcNAc)2. Involved in the control of morphological differentiation. The protein is Diacetylchitobiose binding protein DasA of Streptomyces coelicolor (strain ATCC BAA-471 / A3(2) / M145).